The following is a 265-amino-acid chain: Speedy protein E8 (265 aa).

Residues M1 to P80 form a disordered region. Residues D66–P80 are compositionally biased toward acidic residues.

The protein belongs to the Speedy/Ringo family.

The protein is Speedy protein E8 of Homo sapiens (Human).